The sequence spans 548 residues: Viridiflorene synthase (548 aa).

Mg(2+)-binding residues include aspartate 301, aspartate 305, aspartate 444, threonine 448, and glutamate 452. Residues 301–305 (DDTFD) carry the DDXXD motif motif.

It belongs to the terpene synthase family. Tpsa subfamily. Mg(2+) serves as cofactor. Expressed in stem and leaf trichomes. Detected in roots, fruits and flowers.

It localises to the cytoplasm. It catalyses the reaction (2E,6E)-farnesyl diphosphate = viridiflorene + diphosphate. Its pathway is secondary metabolite biosynthesis; terpenoid biosynthesis. Sesquiterpene synthase involved in the production of viridiflorene from (E,E)-farnesyl diphosphate. Can also use (Z,Z)-FPP to make several unidentified sesquiterpenes. This is Viridiflorene synthase from Solanum lycopersicum (Tomato).